Reading from the N-terminus, the 429-residue chain is UDP-N-acetylglucosamine 1-carboxyvinyltransferase (429 aa).

Position 22–23 (22–23 (KN)) interacts with phosphoenolpyruvate. Residue arginine 102 participates in UDP-N-acetyl-alpha-D-glucosamine binding. The active-site Proton donor is the cysteine 126. Cysteine 126 carries the 2-(S-cysteinyl)pyruvic acid O-phosphothioketal modification. UDP-N-acetyl-alpha-D-glucosamine contacts are provided by residues 131-135 (RPVDL), aspartate 316, and isoleucine 338.

This sequence belongs to the EPSP synthase family. MurA subfamily.

The protein localises to the cytoplasm. The catalysed reaction is phosphoenolpyruvate + UDP-N-acetyl-alpha-D-glucosamine = UDP-N-acetyl-3-O-(1-carboxyvinyl)-alpha-D-glucosamine + phosphate. The protein operates within cell wall biogenesis; peptidoglycan biosynthesis. Cell wall formation. Adds enolpyruvyl to UDP-N-acetylglucosamine. In Methylocella silvestris (strain DSM 15510 / CIP 108128 / LMG 27833 / NCIMB 13906 / BL2), this protein is UDP-N-acetylglucosamine 1-carboxyvinyltransferase.